The following is a 91-amino-acid chain: UPF0358 protein SERP0701 (91 aa).

Belongs to the UPF0358 family.

The protein is UPF0358 protein SERP0701 of Staphylococcus epidermidis (strain ATCC 35984 / DSM 28319 / BCRC 17069 / CCUG 31568 / BM 3577 / RP62A).